Here is a 106-residue protein sequence, read N- to C-terminus: Large ribosomal subunit protein bL21 (106 aa).

This sequence belongs to the bacterial ribosomal protein bL21 family. As to quaternary structure, part of the 50S ribosomal subunit. Contacts protein L20.

Its function is as follows. This protein binds to 23S rRNA in the presence of protein L20. The chain is Large ribosomal subunit protein bL21 from Xanthomonas campestris pv. campestris (strain ATCC 33913 / DSM 3586 / NCPPB 528 / LMG 568 / P 25).